The primary structure comprises 341 residues: Retinol dehydrogenase 10-A (341 aa).

A helical; Signal-anchor transmembrane segment spans residues 3-23; sequence IVLEFFLVTFRVLWAFVLAAG. 40–64 serves as a coordination point for NADP(+); sequence LITGAGSGLGRLFALEFARRRAQLV. Ser-197 serves as a coordination point for substrate. The Proton acceptor role is filled by Tyr-210.

This sequence belongs to the short-chain dehydrogenases/reductases (SDR) family.

It localises to the microsome membrane. The protein localises to the endoplasmic reticulum membrane. It carries out the reaction all-trans-retinol + NADP(+) = all-trans-retinal + NADPH + H(+). The protein operates within cofactor metabolism; retinol metabolism. Its function is as follows. Retinol dehydrogenase with a clear preference for NADP. Converts all-trans-retinol to all-trans-retinal. Has no detectable activity towards 11-cis-retinol, 9-cis-retinol and 13-cis-retinol. The sequence is that of Retinol dehydrogenase 10-A (rdh10-a) from Xenopus laevis (African clawed frog).